Reading from the N-terminus, the 574-residue chain is Septation ring formation regulator EzrA (574 aa).

The Extracellular portion of the chain corresponds to 1–7 (MSSGIIL). Residues 8-26 (LIVAIVLLVIIAYLVGVII) form a helical membrane-spanning segment. The Cytoplasmic portion of the chain corresponds to 27–574 (RKRNDTLITS…YEKTRERIRF (548 aa)). Coiled coils occupy residues 102 to 131 (NFIR…REAL), 161 to 190 (ENED…FVAL), 276 to 379 (VTLD…QQEK), and 459 to 493 (QLEA…NLEE).

Belongs to the EzrA family.

It localises to the cell membrane. Negative regulator of FtsZ ring formation; modulates the frequency and position of FtsZ ring formation. Inhibits FtsZ ring formation at polar sites. Interacts either with FtsZ or with one of its binding partners to promote depolymerization. The chain is Septation ring formation regulator EzrA from Streptococcus equi subsp. zooepidemicus (strain H70).